The primary structure comprises 421 residues: ATP-dependent RNA helicase eIF4A (421 aa).

Residues 1 to 26 are disordered; the sequence is MSNDKGLEEIPEDQSTTPHKPTSNVG. Positions 13–26 are enriched in polar residues; it reads DQSTTPHKPTSNVG. The Q motif signature appears at 48 to 76; the sequence is DSFDAMELKPELLRGVYAYGFERPSAIQQ. The Helicase ATP-binding domain occupies 79–249; it reads IKPIIKGSDV…TKFMRDPVRI (171 aa). 92–99 contributes to the ATP binding site; sequence AQSGTGKT. Positions 197–200 match the DEAD box motif; the sequence is DEAD. In terms of domain architecture, Helicase C-terminal spans 260–421; the sequence is GIKQFYIAVE…EMPMNVADLI (162 aa).

It belongs to the DEAD box helicase family. eIF4A subfamily. Component of the eIF4F complex, which composition varies with external and internal environmental conditions. It is composed of at least eIF4A, eIF4E and eIF4G.

The protein resides in the cytoplasm. It catalyses the reaction ATP + H2O = ADP + phosphate + H(+). ATP-dependent RNA helicase which is a subunit of the eIF4F complex involved in cap recognition and is required for mRNA binding to ribosome. In the current model of translation initiation, eIF4A unwinds RNA secondary structures in the 5'-UTR of mRNAs which is necessary to allow efficient binding of the small ribosomal subunit, and subsequent scanning for the initiator codon. This chain is ATP-dependent RNA helicase eIF4A (tif1), found in Aspergillus oryzae (strain ATCC 42149 / RIB 40) (Yellow koji mold).